The primary structure comprises 195 residues: MIIPTIIEKNVGYDIFSRLLKDRIIFVGGREGEVDTASATMIIAQLLYLDAEDSEREINLYINSPGGLVTAGLAIYDTMQFIKAPITTICMGQAMSFGAVLLAAGSKGKRYALPHARIMIHQPLIWGGGISGQVTDIEIESNELRKNKEHLLDILAHHTGQDKEKIRQDSERNYYMSAQEAKAYGLIDEVLDLKK.

Ser-96 serves as the catalytic Nucleophile. Residue His-121 is part of the active site.

It belongs to the peptidase S14 family. Fourteen ClpP subunits assemble into 2 heptameric rings which stack back to back to give a disk-like structure with a central cavity, resembling the structure of eukaryotic proteasomes.

The protein resides in the cytoplasm. The catalysed reaction is Hydrolysis of proteins to small peptides in the presence of ATP and magnesium. alpha-casein is the usual test substrate. In the absence of ATP, only oligopeptides shorter than five residues are hydrolyzed (such as succinyl-Leu-Tyr-|-NHMec, and Leu-Tyr-Leu-|-Tyr-Trp, in which cleavage of the -Tyr-|-Leu- and -Tyr-|-Trp bonds also occurs).. In terms of biological role, cleaves peptides in various proteins in a process that requires ATP hydrolysis. Has a chymotrypsin-like activity. Plays a major role in the degradation of misfolded proteins. The polypeptide is ATP-dependent Clp protease proteolytic subunit (Elusimicrobium minutum (strain Pei191)).